The chain runs to 373 residues: Dual-specificity RNA methyltransferase RlmN (373 aa).

Residue Glu104 is the Proton acceptor of the active site. The Radical SAM core domain maps to 110–349 (KNQRTTLCIS…VTIRKIRGYD (240 aa)). An intrachain disulfide couples Cys117 to Cys354. Positions 124, 128, and 131 each coordinate [4Fe-4S] cluster. S-adenosyl-L-methionine is bound by residues 178–179 (GE), Ser210, 232–234 (SLH), and Asn311. The S-methylcysteine intermediate role is filled by Cys354.

This sequence belongs to the radical SAM superfamily. RlmN family. [4Fe-4S] cluster is required as a cofactor.

It is found in the cytoplasm. The catalysed reaction is adenosine(2503) in 23S rRNA + 2 reduced [2Fe-2S]-[ferredoxin] + 2 S-adenosyl-L-methionine = 2-methyladenosine(2503) in 23S rRNA + 5'-deoxyadenosine + L-methionine + 2 oxidized [2Fe-2S]-[ferredoxin] + S-adenosyl-L-homocysteine. The enzyme catalyses adenosine(37) in tRNA + 2 reduced [2Fe-2S]-[ferredoxin] + 2 S-adenosyl-L-methionine = 2-methyladenosine(37) in tRNA + 5'-deoxyadenosine + L-methionine + 2 oxidized [2Fe-2S]-[ferredoxin] + S-adenosyl-L-homocysteine. Its function is as follows. Specifically methylates position 2 of adenine 2503 in 23S rRNA and position 2 of adenine 37 in tRNAs. m2A2503 modification seems to play a crucial role in the proofreading step occurring at the peptidyl transferase center and thus would serve to optimize ribosomal fidelity. The protein is Dual-specificity RNA methyltransferase RlmN of Buchnera aphidicola subsp. Baizongia pistaciae (strain Bp).